Reading from the N-terminus, the 134-residue chain is Holo-[acyl-carrier-protein] synthase (134 aa).

2 residues coordinate Mg(2+): aspartate 8 and glutamate 57.

It belongs to the P-Pant transferase superfamily. AcpS family. Mg(2+) serves as cofactor.

Its subcellular location is the cytoplasm. It catalyses the reaction apo-[ACP] + CoA = holo-[ACP] + adenosine 3',5'-bisphosphate + H(+). Its function is as follows. Transfers the 4'-phosphopantetheine moiety from coenzyme A to a Ser of acyl-carrier-protein. The polypeptide is Holo-[acyl-carrier-protein] synthase (Agrobacterium fabrum (strain C58 / ATCC 33970) (Agrobacterium tumefaciens (strain C58))).